The chain runs to 905 residues: Protein HID1 (905 aa).

Residues threonine 139–lysine 191 adopt a coiled-coil conformation. A compositionally biased stretch (basic and acidic residues) spans glutamate 147–lysine 191. Disordered regions lie at residues glutamate 147–aspartate 217, aspartate 381–glutamine 404, and serine 690–methionine 793. Composition is skewed to low complexity over residues threonine 192–asparagine 210 and histidine 395–glutamine 404. Residues serine 690–asparagine 700 are compositionally biased toward polar residues. Positions glutamate 701–serine 718 are enriched in basic and acidic residues. Over residues lysine 719–serine 760 the composition is skewed to polar residues.

It belongs to the hid-1 family.

The polypeptide is Protein HID1 (hid1) (Dictyostelium discoideum (Social amoeba)).